The chain runs to 115 residues: Phosphoribosyl-AMP cyclohydrolase (115 aa).

Asp80 is a binding site for Mg(2+). Cys81 provides a ligand contact to Zn(2+). The Mg(2+) site is built by Asp82 and Asp84. Cys97 and Cys104 together coordinate Zn(2+).

This sequence belongs to the PRA-CH family. As to quaternary structure, homodimer. It depends on Mg(2+) as a cofactor. Zn(2+) is required as a cofactor.

The protein resides in the cytoplasm. The catalysed reaction is 1-(5-phospho-beta-D-ribosyl)-5'-AMP + H2O = 1-(5-phospho-beta-D-ribosyl)-5-[(5-phospho-beta-D-ribosylamino)methylideneamino]imidazole-4-carboxamide. It functions in the pathway amino-acid biosynthesis; L-histidine biosynthesis; L-histidine from 5-phospho-alpha-D-ribose 1-diphosphate: step 3/9. Catalyzes the hydrolysis of the adenine ring of phosphoribosyl-AMP. The sequence is that of Phosphoribosyl-AMP cyclohydrolase from Mycobacterium leprae (strain Br4923).